Here is a 700-residue protein sequence, read N- to C-terminus: MSIASDPLIAGLDDQQREAVLAPRGPVCVLAGAGTGKTRTITHRIASLVASGHVAAGQVLAVTFTQRAAGEMRSRLRALDAAARTGSGVGAVQALTFHAAAYRQLRYFWSRVIADTGWQLLDSKFAVVARAASRTRLHASTDDVRDLAGEIEWAKASLIGPEEYVTAVAAARRDPPLDAAQIAAVYSEYEALKARGDGVTLLDFDDLLLHTAAAIENDAAVAEEFQDRYRCFVVDEYQDVTPLQQRVLSAWLGDRDDLTVVGDANQTIYSFTGASPRFLLDFSRRFPDAAVVRLERDYRSTPQVVSLANRVIAAARGRVAGSKLRLSGQREPGPVPSFHEHSDEPAEAATVAASIARLIASGTPPSEVAILYRVNAQSEVYEEALTQAGIAYQVRGGEGFFNRQEIKQALLALQRVSERDTDAALSDVVRAVLAPLGLTAQPPVGTRARERWEALTALAELVDDELAQRPALQLPGLLAELRRRAEARHPPVVQGVTLASLHAAKGLEWDAVFLVGLADGTLPISHALAHGPNSEPVEEERRLLYVGITRARVHLALSWALSRSPGGRQSRKPSRFLNGIAPQTRADPVPGTSRRNRGAAARCRICNNELNTSAAVMLRRCETCAADVDEELLLQLKSWRLSTAKEQNVPAYVVFTDNTLIAIAELLPTDDAALIAIPGIGARKLEQYGSDVLQLVRGRT.

The UvrD-like helicase ATP-binding domain occupies 10-301; the sequence is AGLDDQQREA…VRLERDYRST (292 aa). Residues 34–39 and arginine 299 each bind ATP; that span reads GTGKTR. Residues 302-553 form the UvrD-like helicase C-terminal domain; that stretch reads PQVVSLANRV…LYVGITRARV (252 aa). The interval 565–595 is disordered; it reads PGGRQSRKPSRFLNGIAPQTRADPVPGTSRR. Residues 626-700 enclose the HRDC domain; sequence ADVDEELLLQ…DVLQLVRGRT (75 aa).

This sequence belongs to the helicase family. UvrD subfamily. Requires Mg(2+) as cofactor.

The catalysed reaction is Couples ATP hydrolysis with the unwinding of duplex DNA by translocating in the 3'-5' direction.. The enzyme catalyses ATP + H2O = ADP + phosphate + H(+). Its function is as follows. DNA-dependent ATPase, stimulated equally by ss- and dsDNA. Has both ATPase and helicase activities. The protein is ATP-dependent DNA helicase UvrD2 (uvrD2) of Mycobacterium bovis (strain ATCC BAA-935 / AF2122/97).